The following is a 185-amino-acid chain: Ribosome-recycling factor (185 aa).

This sequence belongs to the RRF family.

It localises to the cytoplasm. Responsible for the release of ribosomes from messenger RNA at the termination of protein biosynthesis. May increase the efficiency of translation by recycling ribosomes from one round of translation to another. The polypeptide is Ribosome-recycling factor (Streptococcus thermophilus (strain ATCC BAA-491 / LMD-9)).